Here is a 442-residue protein sequence, read N- to C-terminus: GTPase Der (442 aa).

EngA-type G domains follow at residues 4–169 and 178–353; these read PIVA…PENN and IKIA…EQAT. Residues 10–17, 57–61, 121–124, 184–191, 231–235, and 296–299 contribute to the GTP site; these read GRPNVGKS, DTGGL, NKIE, DTAGM, and NKWD. The region spanning 354–438 is the KH-like domain; that stretch reads RRISTSVLNE…PMRFFIRERE (85 aa).

This sequence belongs to the TRAFAC class TrmE-Era-EngA-EngB-Septin-like GTPase superfamily. EngA (Der) GTPase family. In terms of assembly, associates with the 50S ribosomal subunit.

Functionally, GTPase that plays an essential role in the late steps of ribosome biogenesis. This chain is GTPase Der, found in Heliobacterium modesticaldum (strain ATCC 51547 / Ice1).